The sequence spans 1500 residues: Secreted chitinase LysM12 (1500 aa).

Positions 1–23 (MAPLWNGMAAGLLLSAAVVSGQA) are cleaved as a signal peptide. N-linked (GlcNAc...) asparagine glycosylation is found at N53, N225, N251, and N270. LysM domains are found at residues 303-348 (RTQK…HVCC) and 367-415 (ATTT…VICI). The 69-residue stretch at 428–496 (DAECGPQVPG…TNGCISHCGM (69 aa)) folds into the Chitin-binding type-1 domain. 4 disulfide bridges follow: C431–C459, C453–C465, C458–C472, and C490–C494. A GH18 domain is found at 507–879 (FRSVGYYESY…PGMILQMKSG (373 aa)). E625 acts as the Proton donor in catalysis. Chitin is bound at residue Y626. N-linked (GlcNAc...) asparagine glycosylation is found at N721 and N800. W852 is a chitin binding site. 2 N-linked (GlcNAc...) asparagine glycosylation sites follow: N892 and N983. The segment at 1164–1193 (IPKDIPYPDKTKRKDKDDDDNKKTEATDSE) is disordered. Basic and acidic residues predominate over residues 1169 to 1193 (PYPDKTKRKDKDDDDNKKTEATDSE).

It belongs to the glycosyl hydrolase 18 family. Chitinase class V subfamily.

The protein resides in the secreted. The catalysed reaction is Random endo-hydrolysis of N-acetyl-beta-D-glucosaminide (1-&gt;4)-beta-linkages in chitin and chitodextrins.. Its function is as follows. Secreted chitinase involved in the degradation of chitin, a component of the cell walls of fungi and exoskeletal elements of some animals (including worms and arthropods). Involved in pathogenesis via manipulation of host defenses for successful infection. The sequence is that of Secreted chitinase LysM12 from Penicillium expansum (Blue mold rot fungus).